The chain runs to 388 residues: Phosphopentomutase (388 aa).

Positions 10, 282, 287, 323, 324, and 335 each coordinate Mn(2+).

The protein belongs to the phosphopentomutase family. The cofactor is Mn(2+).

It is found in the cytoplasm. It catalyses the reaction 2-deoxy-alpha-D-ribose 1-phosphate = 2-deoxy-D-ribose 5-phosphate. The catalysed reaction is alpha-D-ribose 1-phosphate = D-ribose 5-phosphate. It participates in carbohydrate degradation; 2-deoxy-D-ribose 1-phosphate degradation; D-glyceraldehyde 3-phosphate and acetaldehyde from 2-deoxy-alpha-D-ribose 1-phosphate: step 1/2. In terms of biological role, isomerase that catalyzes the conversion of deoxy-ribose 1-phosphate (dRib-1-P) and ribose 1-phosphate (Rib-1-P) to deoxy-ribose 5-phosphate (dRib-5-P) and ribose 5-phosphate (Rib-5-P), respectively. In Desulfitobacterium hafniense (strain DSM 10664 / DCB-2), this protein is Phosphopentomutase.